A 250-amino-acid chain; its full sequence is Acyl-coenzyme A diphosphatase fit1 (250 aa).

At 1–23 (MTEKTASHYWNEETSILKLRRKD) the chain is on the cytoplasmic side. Residues 24–44 (ILLFEIYATTLLLGSIYSIYV) form a helical membrane-spanning segment. Residues 45 to 58 (DKWSITSYFGNSKN) lie on the Lumenal side of the membrane. A helical membrane pass occupies residues 59-79 (LINLIFVKRGWFWTSLVYFYH). Residues 80–95 (AWDQKRNKIDFKFISR) are Cytoplasmic-facing. The helical transmembrane segment at 96–116 (YIVATLWWMFVTQWFIGPGLI) threads the bilayer. Residues 117 to 160 (DRTFALSGGSCKNFDGDSSVFIPLTASTCKGLNGSWSGGHDLSG) lie on the Lumenal side of the membrane. N149 carries an N-linked (GlcNAc...) asparagine glycan. H161 is a catalytic residue. Residues 161-181 (HVFLLTHSSLFMLSENFSFIL) form a helical membrane-spanning segment. Topologically, residues 182–191 (NNGIKATSTK) are cytoplasmic. Residues 192–212 (VLFGLLGLWWWMLFVTASFYH) form a helical membrane-spanning segment. The active site involves H212. Position 213 (T213) is a topological domain, lumenal. A helical membrane pass occupies residues 214–234 (TFEKCTGFFSGILEWSIVYVF). The Cytoplasmic portion of the chain corresponds to 235–250 (SSRMPAVADLLGSSDY).

It belongs to the FIT family. Fungal FIT2B/SCS3 subfamily.

The protein localises to the endoplasmic reticulum membrane. The catalysed reaction is an acyl-CoA + H2O = an acyl-4'-phosphopantetheine + adenosine 3',5'-bisphosphate + 2 H(+). It carries out the reaction (9Z)-octadecenoyl-CoA + H2O = S-(9Z-octadecenoyl)-4'-phosphopantetheine + adenosine 3',5'-bisphosphate + 2 H(+). It catalyses the reaction (5Z,8Z,11Z,14Z)-eicosatetraenoyl-CoA + H2O = S-(5Z,8Z,11Z,14Z-eicosatetraenoyl)-4'-phosphopantetheine + adenosine 3',5'-bisphosphate + 2 H(+). The enzyme catalyses hexadecanoyl-CoA + H2O = S-hexadecanoyl-4'-phosphopantetheine + adenosine 3',5'-bisphosphate + 2 H(+). Fatty acyl-coenzyme A (CoA) diphosphatase that hydrolyzes fatty acyl-CoA to yield acyl-4'-phosphopantetheine and adenosine 3',5'-bisphosphate. Preferentially hydrolyzes unsaturated long-chain acyl-CoA substrates in the endoplasmic reticulum (ER) lumen. This catalytic activity is required for maintaining ER structure and for lipid droplets (LDs) biogenesis, which are lipid storage organelles involved in maintaining lipid and energy homeostasis. May directly bind to diacylglycerol (DAGs) and triacylglycerol, which is also important for LD biogenesis. May support directional budding of nacent LDs from the ER into the cytosol by reducing DAG levels at sites of LD formation. May play a role in the regulation of cell morphology and cytoskeletal organization. The polypeptide is Acyl-coenzyme A diphosphatase fit1 (Schizosaccharomyces pombe (strain 972 / ATCC 24843) (Fission yeast)).